The chain runs to 744 residues: Tripartite motif-containing protein 2 (744 aa).

Ser10 is subject to Phosphoserine. An RING-type zinc finger spans residues 23-64 (CSICLERYKNPKVLPCLHTFCERCLQNYIPAHSLTLSCPVCR). Residues 113–154 (GKPLSCPNHDGNVMEFYCQSCETAMCRECTEGEHAEHPTVPL) form a B box-type zinc finger. Positions 118, 121, 141, and 146 each coordinate Zn(2+). The Filamin repeat unit spans residues 320–421 (TTNAVASETV…IRGSPFKLKV (102 aa)). At Thr371 the chain carries Phosphothreonine. Phosphoserine is present on residues Ser375, Ser424, and Ser428. The tract at residues 432 to 462 (EGVKRRVKSPGSGHVKQKAVKRPASMYSTGK) is disordered. NHL repeat units lie at residues 473 to 516 (IFRV…FSND), 520 to 563 (KSRF…FSSD), 564 to 605 (GKFK…FQPN), 609 to 652 (VTRF…FNQE), 656 to 699 (MLKF…FDGS), and 700 to 743 (GSFL…YRYL).

The protein belongs to the TRIM/RBCC family. Forms homooligomers. Interacts with TRIM3; this interaction reduces TRIM2 activity. Interacts with myosin V; myosin V may not be a substrate for ubiquitination. Interacts with NEFL. Interacts with phosphorylated BCL2L11. Interacts with SIRPA. In terms of processing, RING-type zinc finger-dependent and UBE2D1-dependent autoubiquitination.

Its subcellular location is the cytoplasm. It catalyses the reaction S-ubiquitinyl-[E2 ubiquitin-conjugating enzyme]-L-cysteine + [acceptor protein]-L-lysine = [E2 ubiquitin-conjugating enzyme]-L-cysteine + N(6)-ubiquitinyl-[acceptor protein]-L-lysine.. It functions in the pathway protein modification; protein ubiquitination. Its function is as follows. UBE2D1-dependent E3 ubiquitin-protein ligase that mediates the ubiquitination of NEFL and of phosphorylated BCL2L11. Plays a neuroprotective function. May play a role in neuronal rapid ischemic tolerance. Plays a role in antiviral immunity and limits New World arenavirus infection independently of its ubiquitin ligase activity. The chain is Tripartite motif-containing protein 2 (TRIM2) from Homo sapiens (Human).